The chain runs to 291 residues: Phosphate import ATP-binding protein PstB (291 aa).

Residues Ala43–Ile286 enclose the ABC transporter domain. Position 75 to 82 (Gly75 to Ser82) interacts with ATP.

It belongs to the ABC transporter superfamily. Phosphate importer (TC 3.A.1.7) family. In terms of assembly, the complex is composed of two ATP-binding proteins (PstB), two transmembrane proteins (PstC and PstA) and a solute-binding protein (PstS).

Its subcellular location is the cell inner membrane. It catalyses the reaction phosphate(out) + ATP + H2O = ADP + 2 phosphate(in) + H(+). Part of the ABC transporter complex PstSACB involved in phosphate import. Responsible for energy coupling to the transport system. This Alcaligenes faecalis protein is Phosphate import ATP-binding protein PstB.